The chain runs to 227 residues: Probable 2-phosphosulfolactate phosphatase (227 aa).

It belongs to the ComB family. It depends on Mg(2+) as a cofactor.

It carries out the reaction (2R)-O-phospho-3-sulfolactate + H2O = (2R)-3-sulfolactate + phosphate. In Thermotoga petrophila (strain ATCC BAA-488 / DSM 13995 / JCM 10881 / RKU-1), this protein is Probable 2-phosphosulfolactate phosphatase.